The following is an 88-amino-acid chain: Small ribosomal subunit protein bS20 (88 aa).

The tract at residues 1–25 (MANSAQARKRARQAVAQNAHNSSLR) is disordered.

It belongs to the bacterial ribosomal protein bS20 family.

Binds directly to 16S ribosomal RNA. In Cupriavidus pinatubonensis (strain JMP 134 / LMG 1197) (Cupriavidus necator (strain JMP 134)), this protein is Small ribosomal subunit protein bS20.